The primary structure comprises 469 residues: GTPase Der (469 aa).

2 EngA-type G domains span residues 3–167 (PTVA…PDEV) and 175–348 (PKFA…RAAM). GTP is bound by residues 9 to 16 (GRPNVGKS), 56 to 60 (DTGGF), 119 to 122 (NKAE), 181 to 188 (GRPNVGKS), 228 to 232 (DTAGV), and 293 to 296 (NKWD). The 85-residue stretch at 349–433 (SKLATPKLTR…PLRVQYKSSE (85 aa)) folds into the KH-like domain. Positions 429–469 (YKSSENPFDNDEKDKPRAKPKPMSKMRGREKEVRYGKNSKK) are disordered.

This sequence belongs to the TRAFAC class TrmE-Era-EngA-EngB-Septin-like GTPase superfamily. EngA (Der) GTPase family. As to quaternary structure, associates with the 50S ribosomal subunit.

GTPase that plays an essential role in the late steps of ribosome biogenesis. This chain is GTPase Der, found in Chromobacterium violaceum (strain ATCC 12472 / DSM 30191 / JCM 1249 / CCUG 213 / NBRC 12614 / NCIMB 9131 / NCTC 9757 / MK).